The chain runs to 197 residues: Small ribosomal subunit protein uS4B (197 aa).

Positions 88 to 153 constitute an S4 RNA-binding domain; sequence CRLDNMVYRM…IEKYLSNLKN (66 aa).

Belongs to the universal ribosomal protein uS4 family. Part of the 30S ribosomal subunit. Contacts protein S5. The interaction surface between S4 and S5 is involved in control of translational fidelity.

Functionally, one of the primary rRNA binding proteins, it binds directly to 16S rRNA where it nucleates assembly of the body of the 30S subunit. Its function is as follows. With S5 and S12 plays an important role in translational accuracy. The protein is Small ribosomal subunit protein uS4B of Alkaliphilus oremlandii (strain OhILAs) (Clostridium oremlandii (strain OhILAs)).